The following is a 617-amino-acid chain: mRNA export factor MEX67 (617 aa).

Over residues 1 to 10 (MSYRGRGGGY) the composition is skewed to gly residues. A disordered region spans residues 1 to 24 (MSYRGRGGGYNNNRGQFSSGPHQH). 3 LRR repeats span residues 185 to 206 (DVDS…TSMA), 211 to 232 (KLQN…ETWR), and 237 to 258 (FLRE…AEIQ). One can recognise an NTF2 domain in the interval 309–499 (LATNFIANYL…MIVASDTLLI (191 aa)). Disordered stretches follow at residues 442–469 (EVDG…HKRI) and 513–554 (LPSN…TTAD). Composition is skewed to low complexity over residues 445-459 (GSAS…GGSR) and 526-542 (ATST…TTPQ). One can recognise a TAP-C domain in the interval 565–617 (QIQQELLVKILLETKLNINYGIMLCEQSNWDYQQASVNFKNSAASLPSDAFVQ).

This sequence belongs to the NXF family. As to quaternary structure, interacts with nucleoporin complex protein MTR2.

It localises to the nucleus. The protein resides in the cytoplasm. Its function is as follows. Involved in the export of mRNA from the nucleus to the cytoplasm. The chain is mRNA export factor MEX67 from Candida albicans (strain SC5314 / ATCC MYA-2876) (Yeast).